The chain runs to 353 residues: D-alanine--D-alanine ligase (353 aa).

Positions 141 to 349 (KAAFAAAGLP…LEELVSQLVI (209 aa)) constitute an ATP-grasp domain. An ATP-binding site is contributed by 176 to 231 (EAKLKYPCFVKPANLGSSVGISKAQNRNELLIGLDKAASLDRRIVVEQGVSARELE). Mg(2+) is bound by residues D302, E316, and N318.

It belongs to the D-alanine--D-alanine ligase family. It depends on Mg(2+) as a cofactor. The cofactor is Mn(2+).

The protein resides in the cytoplasm. The catalysed reaction is 2 D-alanine + ATP = D-alanyl-D-alanine + ADP + phosphate + H(+). It functions in the pathway cell wall biogenesis; peptidoglycan biosynthesis. In terms of biological role, cell wall formation. This Prochlorococcus marinus (strain MIT 9313) protein is D-alanine--D-alanine ligase.